We begin with the raw amino-acid sequence, 189 residues long: Ribosome hibernation promotion factor (189 aa).

It belongs to the HPF/YfiA ribosome-associated protein family. Long HPF subfamily. Interacts with 100S ribosomes.

Its subcellular location is the cytoplasm. Required for dimerization of active 70S ribosomes into 100S ribosomes in stationary phase; 100S ribosomes are translationally inactive and sometimes present during exponential growth. In Staphylococcus epidermidis (strain ATCC 35984 / DSM 28319 / BCRC 17069 / CCUG 31568 / BM 3577 / RP62A), this protein is Ribosome hibernation promotion factor.